A 151-amino-acid chain; its full sequence is Copper transporter 3 (151 aa).

A run of 2 helical transmembrane segments spans residues 52–72 (LKMYWVCLAVIFVISAFSECL) and 103–123 (YLVMLAVMSFNGGVFVAAMAG).

The protein belongs to the copper transporter (Ctr) (TC 1.A.56) family. SLC31A subfamily. In terms of tissue distribution, highly expressed in stems and at lower levels in leaves and flowers.

It localises to the membrane. Functionally, involved in the transport of copper. The protein is Copper transporter 3 (COPT3) of Arabidopsis thaliana (Mouse-ear cress).